A 513-amino-acid polypeptide reads, in one-letter code: Butyrophilin subfamily 3 member A1 (513 aa).

The signal sequence occupies residues 1 to 29; sequence MKMASFLAFLLLNFRVCLLLLQLLMPHSA. Ig-like V-type domains lie at 30–139 and 145–236; these read QFSV…KALV and ALGS…ASIS. Topologically, residues 30–254 are extracellular; that stretch reads QFSVLGPSGP…AQRWIAALAG (225 aa). 2 cysteine pairs are disulfide-bonded: cysteine 52-cysteine 126 and cysteine 166-cysteine 220. A glycan (N-linked (GlcNAc...) asparagine) is linked at asparagine 115. Residues 255-271 form a helical membrane-spanning segment; the sequence is TLPVLLLLLGGAGYFLW. The Cytoplasmic segment spans residues 272-513; the sequence is QQQEEKKTQF…EPTALTICPA (242 aa). A B30.2/SPRY domain is found at 322–513; the sequence is RGERHSAYNE…EPTALTICPA (192 aa).

This sequence belongs to the immunoglobulin superfamily. BTN/MOG family. As to quaternary structure, homodimer. Post-translationally, N-glycosylated. Detected on T-cells, natural killer cells, dendritic cells and macrophages (at protein level). Ubiquitous. Highly expressed in heart, pancreas and lung, Moderately expressed in placenta, liver and muscle.

It is found in the cell membrane. Plays a role in T-cell activation and in the adaptive immune response. Regulates the proliferation of activated T-cells. Regulates the release of cytokines and IFNG by activated T-cells. Mediates the response of T-cells toward infected and transformed cells that are characterized by high levels of phosphorylated metabolites, such as isopentenyl pyrophosphate. This Homo sapiens (Human) protein is Butyrophilin subfamily 3 member A1 (BTN3A1).